The chain runs to 328 residues: Stress response kinase A (328 aa).

The active-site Proton acceptor is the Asp-201. 2 residues coordinate Mg(2+): Asn-206 and Asp-217. The active site involves Asp-217.

The protein belongs to the SrkA/RdoA protein kinase family. In terms of assembly, monomer. The cofactor is Mg(2+).

It is found in the cytoplasm. It carries out the reaction L-seryl-[protein] + ATP = O-phospho-L-seryl-[protein] + ADP + H(+). The catalysed reaction is L-threonyl-[protein] + ATP = O-phospho-L-threonyl-[protein] + ADP + H(+). Its function is as follows. A protein kinase that phosphorylates Ser and Thr residues. Probably acts to suppress the effects of stress linked to accumulation of reactive oxygen species. Probably involved in the extracytoplasmic stress response. Also has a role in LPS synthesis, through regulation of the galETK expression. In terms of biological role, a protein kinase that phosphorylates Ser and Thr residues. Probably acts to suppress the effects of stress linked to accumulation of reactive oxygen species. Probably involved in the extracytoplasmic stress response. This is Stress response kinase A from Shigella flexneri.